The primary structure comprises 425 residues: MNSTWKQYITILKNVVKPALGCTEPICAAYATSVATQMLGEKAETIDVFVSDNLYKNSMGVFVPRTGRVGLAIAAAAGATGGNPEAGLEVLAKLTQSQVNEAQQLIDAGRVQVKRETTDEFIYCRVVVKGSQHHAEVTISGGHTLIVEKRLDDNVIFSLDSSLPKASTASICDGVDITISSIYDFATHAEFDDIKFILKAKDLNIALAQEGLKNPYGLEVGRTYQKNIDTGLLSKSLDSDILIYTSAASDARMGGANLPAMSNYGSGNQGIAATIPVVKMADFYNADEETLARAFIMSHLGAIYIKSHYPPLSAFCGNAVTSAAAAMAMVYLAGGSFEQSCSAIQNTISDTSGMICDGAKSTCAMKVGSSAQSAMKSSLLALNNHCVTKQGVIAEDVEKTIKNIGRMITTGMPNIDHEIIEIMAS.

The protein belongs to the UPF0597 family.

This Aliivibrio salmonicida (strain LFI1238) (Vibrio salmonicida (strain LFI1238)) protein is UPF0597 protein VSAL_I0741.